A 548-amino-acid chain; its full sequence is Probable 2,3-bisphosphoglycerate-independent phosphoglycerate mutase (548 aa).

Residues Asp-20 and Ser-73 each coordinate Mn(2+). Ser-73 acts as the Phosphoserine intermediate in catalysis. Substrate is bound by residues His-134, 164 to 165 (RD), Arg-200, Arg-207, 279 to 282 (RGDR), and Lys-354. Mn(2+) contacts are provided by Asp-422, His-426, Asp-463, His-464, and His-493.

Belongs to the BPG-independent phosphoglycerate mutase family. As to quaternary structure, monomer. Mn(2+) serves as cofactor.

The catalysed reaction is (2R)-2-phosphoglycerate = (2R)-3-phosphoglycerate. It participates in carbohydrate degradation; glycolysis; pyruvate from D-glyceraldehyde 3-phosphate: step 3/5. Functionally, catalyzes the interconversion of 2-phosphoglycerate and 3-phosphoglycerate. The protein is Probable 2,3-bisphosphoglycerate-independent phosphoglycerate mutase (gpmI) of Leptospira interrogans serogroup Icterohaemorrhagiae serovar Lai (strain 56601).